The primary structure comprises 791 residues: Probable potassium transporter 11 (791 aa).

Residues 1-49 (MASLSESEGTNRGSMWELDQNLDQPMDEEASRLKNMYREKKFSSLLLLR) are Cytoplasmic-facing. Residues 50–70 (LAFQSLGVVFGDLGTSPLYVF) traverse the membrane as a helical segment. Residues 71–87 (YNAFPHGVDDEEDVIGA) lie on the Extracellular side of the membrane. A helical transmembrane segment spans residues 88 to 108 (LSLIIYTLTLIPLLKYVFVVL). Residues 109-175 (RANDNGQGGT…EAHAYKRNCL (67 aa)) lie on the Cytoplasmic side of the membrane. Residues 176-196 (LIVVLIGTCTAIGDGILTPAI) form a helical membrane-spanning segment. Residues 197–215 (SVLSASGGIKVQNPNMSTD) lie on the Extracellular side of the membrane. A glycan (N-linked (GlcNAc...) asparagine) is linked at asparagine 211. A helical transmembrane segment spans residues 216–236 (VVVIVSVIILIGLFSMQHYGT). Residues 237-238 (DK) are Cytoplasmic-facing. A helical membrane pass occupies residues 239 to 259 (VGWLFAPIVLLWFILIGSVGA). Topologically, residues 260–289 (LNIHKYKGSVLKAYNPVYIYRYFQRRNSDS) are extracellular. A helical transmembrane segment spans residues 290 to 310 (WASLGGIMLSITGTEALFADL). At 311–315 (CHFPV) the chain is on the cytoplasmic side. The helical transmembrane segment at 316-338 (FAIQIAFTLIVFPCLLLAYTGQA) threads the bilayer. Over 339–359 (AYIIAHKDHVADAFYRSIPDS) the chain is Extracellular. A helical transmembrane segment spans residues 360–380 (IYWPAFVIATAAAIVASQATI). Over 381 to 411 (SATYSIIKQALALGCFPRVKIVHTSKKFLGQ) the chain is Cytoplasmic. The chain crosses the membrane as a helical span at residues 412 to 432 (IYIPDINWVLLILCIAVTAGF). The Extracellular portion of the chain corresponds to 433 to 444 (KNQSQIGNAYGT). N-linked (GlcNAc...) asparagine glycosylation occurs at asparagine 434. A helical membrane pass occupies residues 445–465 (AVVIVMLVTTFLMVPIMLLVW). The Cytoplasmic segment spans residues 466–468 (KSH). Residues 469 to 489 (WILVVTFIVLSLMVEIPYFSA) traverse the membrane as a helical segment. At 490 to 496 (CLLKIDQ) the chain is on the extracellular side. The helical transmembrane segment at 497–517 (GGWVPLVIATAFFIIMYVWHF) threads the bilayer. The Cytoplasmic portion of the chain corresponds to 518 to 791 (CTVKRYEFEM…LLNVGQIYYI (274 aa)).

The protein belongs to the HAK/KUP transporter (TC 2.A.72.3) family.

The protein resides in the membrane. Its function is as follows. High-affinity potassium transporter. The protein is Probable potassium transporter 11 of Oryza sativa subsp. japonica (Rice).